The following is a 330-amino-acid chain: Aspartate--ammonia ligase (330 aa).

This sequence belongs to the class-II aminoacyl-tRNA synthetase family. AsnA subfamily.

The protein localises to the cytoplasm. It catalyses the reaction L-aspartate + NH4(+) + ATP = L-asparagine + AMP + diphosphate + H(+). The protein operates within amino-acid biosynthesis; L-asparagine biosynthesis; L-asparagine from L-aspartate (ammonia route): step 1/1. The protein is Aspartate--ammonia ligase of Glaesserella parasuis serovar 5 (strain SH0165) (Haemophilus parasuis).